The following is a 565-amino-acid chain: uncharacterized protein (565 aa).

The next 10 helical transmembrane spans lie at 28–48 (IFHFYIYCILLGAVLLFLPFA), 73–93 (ASYGFLDALFLAVSAFSDTGL), 109–129 (VLAILLQLGGIGFVVIAFLVW), 169–189 (LFLFMVELLYGFLYTILFYFI), 262–282 (IVIQWLAISQIIFGGIGYPVL), 315–335 (LIVTAWCFLMLLMVEFIVITS), 364–384 (SLIFGPIPAASRVMQLWFGVI), 393–413 (VFPWSAESDIIKGIMVIAMFI), 461–481 (AFLVAVFGLVSVVLIAILLPL), and 526–546 (TLGLLMIMGQVGVSSSVLTFV).

Belongs to the TrkH potassium transport family.

Its subcellular location is the cell membrane. This is an uncharacterized protein from Mycoplasma pneumoniae (strain ATCC 29342 / M129 / Subtype 1) (Mycoplasmoides pneumoniae).